A 349-amino-acid polypeptide reads, in one-letter code: Phosphoribosylformylglycinamidine cyclo-ligase (349 aa).

Belongs to the AIR synthase family.

The protein resides in the cytoplasm. It carries out the reaction 2-formamido-N(1)-(5-O-phospho-beta-D-ribosyl)acetamidine + ATP = 5-amino-1-(5-phospho-beta-D-ribosyl)imidazole + ADP + phosphate + H(+). It participates in purine metabolism; IMP biosynthesis via de novo pathway; 5-amino-1-(5-phospho-D-ribosyl)imidazole from N(2)-formyl-N(1)-(5-phospho-D-ribosyl)glycinamide: step 2/2. The chain is Phosphoribosylformylglycinamidine cyclo-ligase from Bordetella petrii (strain ATCC BAA-461 / DSM 12804 / CCUG 43448).